A 559-amino-acid polypeptide reads, in one-letter code: Leucine-rich repeat protein soc-2 (559 aa).

The segment covering M1 to R17 has biased composition (basic and acidic residues). The segment at M1–G55 is disordered. 20 LRR repeats span residues Q74–L95, Q97–L118, N120–E142, S143–I164, S166–L187, K189–L210, S212–C233, S235–L256, N258–C279, Q281–M302, K305–Q326, S329–K350, R353–W374, S376–L397, N399–L420, K422–L443, H445–L466, S468–L489, S491–C513, and S515–G536.

It belongs to the SHOC2 family. In terms of assembly, interacts with let-60.

Acts as a Ras effector and participates in MAPK pathway activation. Probably acts as a scaffolding protein in a protein phosphatase complex that specifically dephosphorylates Raf kinase and stimulates Raf activity at specialized signaling complexes upon Ras activation. Required for vulval development. Involved in fluid homeostasis. Plays a role in nicotinic acetylcholine receptor (nAChR)-mediated sensitivity to nicotine. The polypeptide is Leucine-rich repeat protein soc-2 (soc-2) (Caenorhabditis elegans).